Reading from the N-terminus, the 156-residue chain is ATP synthase subunit b (156 aa).

The chain crosses the membrane as a helical span at residues 7-27; it reads LFAQIIVFFGLVWFTMKFVWP.

This sequence belongs to the ATPase B chain family. In terms of assembly, F-type ATPases have 2 components, F(1) - the catalytic core - and F(0) - the membrane proton channel. F(1) has five subunits: alpha(3), beta(3), gamma(1), delta(1), epsilon(1). F(0) has three main subunits: a(1), b(2) and c(10-14). The alpha and beta chains form an alternating ring which encloses part of the gamma chain. F(1) is attached to F(0) by a central stalk formed by the gamma and epsilon chains, while a peripheral stalk is formed by the delta and b chains.

The protein localises to the cell inner membrane. F(1)F(0) ATP synthase produces ATP from ADP in the presence of a proton or sodium gradient. F-type ATPases consist of two structural domains, F(1) containing the extramembraneous catalytic core and F(0) containing the membrane proton channel, linked together by a central stalk and a peripheral stalk. During catalysis, ATP synthesis in the catalytic domain of F(1) is coupled via a rotary mechanism of the central stalk subunits to proton translocation. Functionally, component of the F(0) channel, it forms part of the peripheral stalk, linking F(1) to F(0). This Neisseria meningitidis serogroup C (strain 053442) protein is ATP synthase subunit b.